The chain runs to 253 residues: 5'/3'-nucleotidase SurE (253 aa).

D8, D9, S39, and N92 together coordinate a divalent metal cation.

It belongs to the SurE nucleotidase family. A divalent metal cation is required as a cofactor.

Its subcellular location is the cytoplasm. The enzyme catalyses a ribonucleoside 5'-phosphate + H2O = a ribonucleoside + phosphate. The catalysed reaction is a ribonucleoside 3'-phosphate + H2O = a ribonucleoside + phosphate. It catalyses the reaction [phosphate](n) + H2O = [phosphate](n-1) + phosphate + H(+). Nucleotidase with a broad substrate specificity as it can dephosphorylate various ribo- and deoxyribonucleoside 5'-monophosphates and ribonucleoside 3'-monophosphates with highest affinity to 3'-AMP. Also hydrolyzes polyphosphate (exopolyphosphatase activity) with the preference for short-chain-length substrates (P20-25). Might be involved in the regulation of dNTP and NTP pools, and in the turnover of 3'-mononucleotides produced by numerous intracellular RNases (T1, T2, and F) during the degradation of various RNAs. This Salmonella arizonae (strain ATCC BAA-731 / CDC346-86 / RSK2980) protein is 5'/3'-nucleotidase SurE.